The following is a 322-amino-acid chain: GATA transcription factor 8 (322 aa).

The segment at 93 to 168 is disordered; sequence TLVEKKEDSF…DKDRVKDNVC (76 aa). Over residues 102–141 the composition is skewed to low complexity; the sequence is FSTNTDSSSSHSQFRSSSPVSVLESSSSSSQTTNTTSLVL. Basic residues predominate over residues 144–154; that stretch reads KHGRPRTKRPR. The Nuclear localization signal signature appears at 147–154; it reads RPRTKRPR. The GATA-type zinc finger occupies 225 to 279; that stretch reads QYPLRKCMHCEVTKTPQWRLGPMGPKTLCNACGVRYKSGRLFPEYRPAASPTFTP.

The protein belongs to the type IV zinc-finger family. Class A subfamily.

The protein resides in the nucleus. In terms of biological role, transcriptional activator that specifically binds 5'-GATA-3' or 5'-GAT-3' motifs within gene promoters. May be involved in the regulation of some light-responsive genes. The polypeptide is GATA transcription factor 8 (GATA8) (Arabidopsis thaliana (Mouse-ear cress)).